The primary structure comprises 86 residues: Co-chaperonin GroES (86 aa).

It belongs to the GroES chaperonin family. As to quaternary structure, heptamer of 7 subunits arranged in a ring. Interacts with the chaperonin GroEL.

It is found in the cytoplasm. In terms of biological role, together with the chaperonin GroEL, plays an essential role in assisting protein folding. The GroEL-GroES system forms a nano-cage that allows encapsulation of the non-native substrate proteins and provides a physical environment optimized to promote and accelerate protein folding. GroES binds to the apical surface of the GroEL ring, thereby capping the opening of the GroEL channel. This is Co-chaperonin GroES from Campylobacter lari (strain RM2100 / D67 / ATCC BAA-1060).